The following is a 317-amino-acid chain: Transaldolase (317 aa).

The active-site Schiff-base intermediate with substrate is lysine 132.

Belongs to the transaldolase family. Type 1 subfamily. Homodimer.

The protein resides in the cytoplasm. The catalysed reaction is D-sedoheptulose 7-phosphate + D-glyceraldehyde 3-phosphate = D-erythrose 4-phosphate + beta-D-fructose 6-phosphate. It participates in carbohydrate degradation; pentose phosphate pathway; D-glyceraldehyde 3-phosphate and beta-D-fructose 6-phosphate from D-ribose 5-phosphate and D-xylulose 5-phosphate (non-oxidative stage): step 2/3. Its function is as follows. Transaldolase is important for the balance of metabolites in the pentose-phosphate pathway. The polypeptide is Transaldolase (Shewanella frigidimarina (strain NCIMB 400)).